A 579-amino-acid polypeptide reads, in one-letter code: Thiol:disulfide interchange protein DsbD (579 aa).

An N-terminal signal peptide occupies residues 1-16 (MKKLFLFFTLIFTAFA). 2 disulfide bridges follow: Cys-124-Cys-129 and Cys-193-Cys-315. 8 helical membrane passes run 178 to 198 (IFGFFVLGLGLAFTPCVLPML), 230 to 250 (LTYTLLGLAVAAIGLPFQIAL), 254 to 274 (YVMIGLSILFVVLALSMFGLF), 296 to 316 (GAFGGAFAMGMIAGLVASPCT), 337 to 357 (AVTLYLLALGMGVPLMLITLF), 376 to 396 (FGFVMLALPVFLLSRILPEVW), 397 to 417 (ESRLWAGLATVFFIWFALQMS), and 420 to 440 (GFGYAIKIISFALAMVTVQPL). In terms of domain architecture, Thioredoxin spans 449–579 (TTTQSAVENM…AFSNWIEKLL (131 aa)). A disulfide bond links Cys-495 and Cys-498.

The protein belongs to the thioredoxin family. DsbD subfamily.

The protein resides in the cell inner membrane. The catalysed reaction is [protein]-dithiol + NAD(+) = [protein]-disulfide + NADH + H(+). It carries out the reaction [protein]-dithiol + NADP(+) = [protein]-disulfide + NADPH + H(+). Functionally, required to facilitate the formation of correct disulfide bonds in some periplasmic proteins and for the assembly of the periplasmic c-type cytochromes. Acts by transferring electrons from cytoplasmic thioredoxin to the periplasm. This transfer involves a cascade of disulfide bond formation and reduction steps. The sequence is that of Thiol:disulfide interchange protein DsbD from Haemophilus influenzae (strain PittGG).